Reading from the N-terminus, the 161-residue chain is MTADTPTTADIDLIQRILPHRYPFLLVDRVRDIEPFKSAVGLKNVTVNEPHFQGHFPGVPIMPGVTIVEAMAQTAAVMVGVSADLADKNFLVYFMGIDSCKFRRKVGPGDVLELHVTATRGKPGAKVWKFDGRAEVDGELACECSFTAMMDLPTSPPGEAG.

Histidine 55 is an active-site residue.

The protein belongs to the thioester dehydratase family. FabZ subfamily.

The protein resides in the cytoplasm. The catalysed reaction is a (3R)-hydroxyacyl-[ACP] = a (2E)-enoyl-[ACP] + H2O. Involved in unsaturated fatty acids biosynthesis. Catalyzes the dehydration of short chain beta-hydroxyacyl-ACPs and long chain saturated and unsaturated beta-hydroxyacyl-ACPs. In Jannaschia sp. (strain CCS1), this protein is 3-hydroxyacyl-[acyl-carrier-protein] dehydratase FabZ.